We begin with the raw amino-acid sequence, 551 residues long: Cytochrome P450 monooxygenase FCK2 (551 aa).

Helical transmembrane passes span 8-28 (FDPANYSLFFVLGVLTHVFIF), 35-55 (LHVFNILQAFAVLESSLVYIV), and 69-89 (VTTISSCFTLSTLMGLLISIL). The N-linked (GlcNAc...) asparagine glycan is linked to N258. A heme-binding site is contributed by C493.

The protein belongs to the cytochrome P450 family. It depends on heme as a cofactor.

The protein resides in the membrane. It functions in the pathway secondary metabolite biosynthesis. In terms of biological role, cytochrome P450 monooxygenase; part of the gene cluster that mediates the biosynthesis of cytokinins such as fusatin, fusatinic acids or 8-oxofusatin, known for their growth promoting and anti-senescence activities toward host plants. FCK1 is a bifunctional enzyme that performs the first steps in the biosynthesis of Fusarium cytokinins. It first condenses adenosine monophosphate (AMP) with dimethylallyl diphosphate (DMAPP) to yield isoprenyl adenosine monophosphate. It then catalyzes the removal of the phosphoribose to produce isopentenylaldehyde. The cytochrome P450 monooxygenase then converts isopentenylaldehyde to trans-zeatin. A condensation step converts trans-zeatin to fusatin which is further modified to produce fusatinic acid. The mechanism for oxidation of fusatin to fusatinic acid remains unknown. 8-oxofusatin could be produced through several pathways, via direct oxygenation of fusatin, or via the 8-oxo-pentenyladenine intermediate which itself must arise from either the prenylation of 8-oxo-AMP by FCK1 and/or oxygenation of isopentenylaldehyde. Both the FCK3 and FCK4 enzymes act downstream of the identified cytokinins to produce yet unidentified compounds. The protein is Cytochrome P450 monooxygenase FCK2 of Fusarium pseudograminearum (strain CS3096) (Wheat and barley crown-rot fungus).